A 448-amino-acid polypeptide reads, in one-letter code: Cytoplasmic tRNA 2-thiolation protein 2 (448 aa).

This sequence belongs to the CTU2/NCS2 family.

Its subcellular location is the cytoplasm. Its pathway is tRNA modification; 5-methoxycarbonylmethyl-2-thiouridine-tRNA biosynthesis. In terms of biological role, plays a central role in 2-thiolation of mcm(5)S(2)U at tRNA wobble positions of tRNA(Lys), tRNA(Glu) and tRNA(Gln). May act by forming a heterodimer with NCS6 that ligates sulfur from thiocarboxylated URM1 onto the uridine of tRNAs at wobble position. Prior mcm(5) tRNA modification by the elongator complex is required for 2-thiolation. May also be involved in protein urmylation. The polypeptide is Cytoplasmic tRNA 2-thiolation protein 2 (Debaryomyces hansenii (strain ATCC 36239 / CBS 767 / BCRC 21394 / JCM 1990 / NBRC 0083 / IGC 2968) (Yeast)).